The sequence spans 354 residues: Uroporphyrinogen decarboxylase (354 aa).

Substrate contacts are provided by residues 25–29 (RQAGR), Asp75, Tyr152, Thr207, and His330.

It belongs to the uroporphyrinogen decarboxylase family. As to quaternary structure, homodimer.

The protein localises to the cytoplasm. The catalysed reaction is uroporphyrinogen III + 4 H(+) = coproporphyrinogen III + 4 CO2. It participates in porphyrin-containing compound metabolism; protoporphyrin-IX biosynthesis; coproporphyrinogen-III from 5-aminolevulinate: step 4/4. Functionally, catalyzes the decarboxylation of four acetate groups of uroporphyrinogen-III to yield coproporphyrinogen-III. This is Uroporphyrinogen decarboxylase from Xanthomonas oryzae pv. oryzae (strain PXO99A).